Consider the following 100-residue polypeptide: SAGA-associated factor 11 (100 aa).

The SGF11-type zinc-finger motif lies at phenylalanine 73–cysteine 94.

Belongs to the SGF11 family. Component of the 1.8 MDa SAGA transcription coactivator-HAT complex. SAGA is built of 5 distinct domains with specialized functions. Within the SAGA complex, SUS1, SGF11, SGF73 and UBP8 form an additional subcomplex of SAGA called the DUB module (deubiquitination module). Interacts directly with SGF73, SUS1 and UBP8.

It is found in the nucleus. Functionally, functions as a component of the transcription regulatory histone acetylation (HAT) complex SAGA. At the promoters, SAGA is required for recruitment of the basal transcription machinery. It influences RNA polymerase II transcriptional activity through different activities such as TBP interaction and promoter selectivity, interaction with transcription activators, and chromatin modification through histone acetylation and deubiquitination. SAGA acetylates nucleosomal histone H3 to some extent (to form H3K9ac, H3K14ac, H3K18ac and H3K23ac). SAGA interacts with DNA via upstream activating sequences (UASs). Involved in transcriptional regulation of a subset of SAGA-regulated genes. Within the SAGA complex, participates in a subcomplex, that specifically deubiquitinates histones H2B. This is SAGA-associated factor 11 from Debaryomyces hansenii (strain ATCC 36239 / CBS 767 / BCRC 21394 / JCM 1990 / NBRC 0083 / IGC 2968) (Yeast).